A 299-amino-acid chain; its full sequence is Bifunctional protein FolD (299 aa).

Residues 169–171, S194, and I235 each bind NADP(+); that span reads GRS.

This sequence belongs to the tetrahydrofolate dehydrogenase/cyclohydrolase family. Homodimer.

The enzyme catalyses (6R)-5,10-methylene-5,6,7,8-tetrahydrofolate + NADP(+) = (6R)-5,10-methenyltetrahydrofolate + NADPH. It catalyses the reaction (6R)-5,10-methenyltetrahydrofolate + H2O = (6R)-10-formyltetrahydrofolate + H(+). It functions in the pathway one-carbon metabolism; tetrahydrofolate interconversion. Its function is as follows. Catalyzes the oxidation of 5,10-methylenetetrahydrofolate to 5,10-methenyltetrahydrofolate and then the hydrolysis of 5,10-methenyltetrahydrofolate to 10-formyltetrahydrofolate. This chain is Bifunctional protein FolD, found in Trichormus variabilis (strain ATCC 29413 / PCC 7937) (Anabaena variabilis).